A 128-amino-acid polypeptide reads, in one-letter code: MIVKSLEDIQGTEDHQKGETWESRRFVLNKDNVGFSLNDTIIKAGTESYFWYKNHIEAVYCIEGEGEVEKKDTGEVWQLKPGTMYLLNDNDKHYLRAKTQMRMVCVFNPALVGTETHDEDGVYPLLAE.

This sequence belongs to the ectoine synthase family.

The catalysed reaction is (2S)-4-acetamido-2-aminobutanoate = L-ectoine + H2O. It functions in the pathway amine and polyamine biosynthesis; ectoine biosynthesis; L-ectoine from L-aspartate 4-semialdehyde: step 3/3. Its function is as follows. Catalyzes the circularization of gamma-N-acetyl-alpha,gamma-diaminobutyric acid (ADABA) to ectoine (1,4,5,6-tetrahydro-2-methyl-4-pyrimidine carboxylic acid), which is an excellent osmoprotectant. The sequence is that of L-ectoine synthase from Oceanobacillus iheyensis (strain DSM 14371 / CIP 107618 / JCM 11309 / KCTC 3954 / HTE831).